The following is a 106-amino-acid chain: ATP-dependent Clp protease adapter protein ClpS (106 aa).

Belongs to the ClpS family. Binds to the N-terminal domain of the chaperone ClpA.

Involved in the modulation of the specificity of the ClpAP-mediated ATP-dependent protein degradation. The protein is ATP-dependent Clp protease adapter protein ClpS of Aliivibrio fischeri (strain ATCC 700601 / ES114) (Vibrio fischeri).